The primary structure comprises 143 residues: Transcriptional regulator MraZ (143 aa).

SpoVT-AbrB domains are found at residues 5 to 47 and 76 to 119; these read TFTP…PKAE and ADEQ…DAES.

The protein belongs to the MraZ family. As to quaternary structure, forms oligomers.

It localises to the cytoplasm. The protein localises to the nucleoid. This is Transcriptional regulator MraZ from Corynebacterium jeikeium (strain K411).